The chain runs to 392 residues: Queuine tRNA-ribosyltransferase (392 aa).

D93 (proton acceptor) is an active-site residue. Substrate-binding positions include 93–97 (DSGGY), D147, Q189, and G216. The interval 247-253 (GVGAPED) is RNA binding. Residue D266 is the Nucleophile of the active site. The segment at 271–275 (TRVAR) is RNA binding; important for wobble base 34 recognition. Zn(2+) contacts are provided by C304, C306, C309, and H335.

The protein belongs to the queuine tRNA-ribosyltransferase family. Homodimer. Within each dimer, one monomer is responsible for RNA recognition and catalysis, while the other monomer binds to the replacement base PreQ1. Requires Zn(2+) as cofactor.

It carries out the reaction 7-aminomethyl-7-carbaguanine + guanosine(34) in tRNA = 7-aminomethyl-7-carbaguanosine(34) in tRNA + guanine. It functions in the pathway tRNA modification; tRNA-queuosine biosynthesis. Functionally, catalyzes the base-exchange of a guanine (G) residue with the queuine precursor 7-aminomethyl-7-deazaguanine (PreQ1) at position 34 (anticodon wobble position) in tRNAs with GU(N) anticodons (tRNA-Asp, -Asn, -His and -Tyr). Catalysis occurs through a double-displacement mechanism. The nucleophile active site attacks the C1' of nucleotide 34 to detach the guanine base from the RNA, forming a covalent enzyme-RNA intermediate. The proton acceptor active site deprotonates the incoming PreQ1, allowing a nucleophilic attack on the C1' of the ribose to form the product. After dissociation, two additional enzymatic reactions on the tRNA convert PreQ1 to queuine (Q), resulting in the hypermodified nucleoside queuosine (7-(((4,5-cis-dihydroxy-2-cyclopenten-1-yl)amino)methyl)-7-deazaguanosine). The sequence is that of Queuine tRNA-ribosyltransferase from Dehalococcoides mccartyi (strain ATCC BAA-2266 / KCTC 15142 / 195) (Dehalococcoides ethenogenes (strain 195)).